Here is a 110-residue protein sequence, read N- to C-terminus: Ribonuclease P protein component 1 (110 aa).

This sequence belongs to the eukaryotic/archaeal RNase P protein component 1 family. In terms of assembly, consists of a catalytic RNA component and at least 4-5 protein subunits.

Its subcellular location is the cytoplasm. It catalyses the reaction Endonucleolytic cleavage of RNA, removing 5'-extranucleotides from tRNA precursor.. In terms of biological role, part of ribonuclease P, a protein complex that generates mature tRNA molecules by cleaving their 5'-ends. This chain is Ribonuclease P protein component 1, found in Aeropyrum pernix (strain ATCC 700893 / DSM 11879 / JCM 9820 / NBRC 100138 / K1).